Consider the following 118-residue polypeptide: MSAPAQPPAEGTEGAAPGGGPPGPPPNTTSNRRLQQTQAQVEEVVDIMRVNVDKVLERDQKLSELDDRADALQAGASVFESSAAKLKRKYWWKNCKMMIMLGAICAIIVVVIVIYIFT.

Over residues 1 to 15 (MSAPAQPPAEGTEGA) the composition is skewed to low complexity. Residues 1–38 (MSAPAQPPAEGTEGAAPGGGPPGPPPNTTSNRRLQQTQ) form a disordered region. The Cytoplasmic segment spans residues 1 to 96 (MSAPAQPPAE…KRKYWWKNCK (96 aa)). Residues 28–38 (TTSNRRLQQTQ) show a composition bias toward polar residues. Positions 33–93 (RLQQTQAQVE…AKLKRKYWWK (61 aa)) constitute a v-SNARE coiled-coil homology domain. S63 is subject to Phosphoserine. Residues 97 to 116 (MMIMLGAICAIIVVVIVIYI) traverse the membrane as a helical; Anchor for type IV membrane protein segment. The Vesicular segment spans residues 117-118 (FT).

It belongs to the synaptobrevin family. As to quaternary structure, interacts with VAPA and VAPB. Post-translationally, (Microbial infection) Targeted and hydrolyzed by C.botulinum neurotoxin type D (BoNT/D, botD) which hydrolyzes the 61-Lys-|-Leu-62 bond and inhibits neurotransmitter release. This is a poor substrate for BoNT/D, high concentrations are required to cleave it in vitro. (Microbial infection) Targeted and hydrolyzed by C.botulinum neurotoxin type F (BoNT/F, botF) which hydrolyzes the 60-Gln-|-Lys-61 bond and inhibits neurotransmitter release. As to expression, expressed in brain and spleen (at protein level). Isoform 1 expressed at very high level in brain. Even higher level found in spinal cord. Isoform 3 expressed in kidney, spleen and liver. Isoforms 2 and 3 expressed in osteoblasts of trabecular bone. Also expressed in heart.

It localises to the cytoplasmic vesicle. Its subcellular location is the secretory vesicle. The protein resides in the synaptic vesicle membrane. It is found in the synapse. The protein localises to the synaptosome. It localises to the cytoplasmic vesicle membrane. Its subcellular location is the mitochondrion outer membrane. Involved in the targeting and/or fusion of transport vesicles to their target membrane. This is Vesicle-associated membrane protein 1 (Vamp1) from Rattus norvegicus (Rat).